Consider the following 315-residue polypeptide: Ribose-phosphate pyrophosphokinase (315 aa).

ATP is bound by residues 40–42 (DGE) and 99–100 (RQ). Mg(2+)-binding residues include His133 and Asp175. Lys198 is a catalytic residue. D-ribose 5-phosphate contacts are provided by residues Arg200, Asp224, and 228–232 (DTAHS).

This sequence belongs to the ribose-phosphate pyrophosphokinase family. Class I subfamily. As to quaternary structure, homohexamer. It depends on Mg(2+) as a cofactor.

The protein localises to the cytoplasm. The enzyme catalyses D-ribose 5-phosphate + ATP = 5-phospho-alpha-D-ribose 1-diphosphate + AMP + H(+). Its pathway is metabolic intermediate biosynthesis; 5-phospho-alpha-D-ribose 1-diphosphate biosynthesis; 5-phospho-alpha-D-ribose 1-diphosphate from D-ribose 5-phosphate (route I): step 1/1. Involved in the biosynthesis of the central metabolite phospho-alpha-D-ribosyl-1-pyrophosphate (PRPP) via the transfer of pyrophosphoryl group from ATP to 1-hydroxyl of ribose-5-phosphate (Rib-5-P). The sequence is that of Ribose-phosphate pyrophosphokinase from Thermotoga maritima (strain ATCC 43589 / DSM 3109 / JCM 10099 / NBRC 100826 / MSB8).